We begin with the raw amino-acid sequence, 92 residues long: PqqA binding protein (92 aa).

It belongs to the PqqD family. In terms of assembly, monomer. Interacts with PqqE.

It functions in the pathway cofactor biosynthesis; pyrroloquinoline quinone biosynthesis. Its function is as follows. Functions as a PqqA binding protein and presents PqqA to PqqE, in the pyrroloquinoline quinone (PQQ) biosynthetic pathway. The polypeptide is PqqA binding protein (Xanthomonas axonopodis pv. citri (strain 306)).